The following is a 226-amino-acid chain: Putative ABC transporter ATP-binding protein BQ02700 (226 aa).

The region spanning 4-225 (IKFDKVTQVF…VAIKEYIRRM (222 aa)) is the ABC transporter domain. Residue 35 to 42 (GANGSGKS) participates in ATP binding.

Belongs to the ABC transporter superfamily.

It localises to the cell inner membrane. Its function is as follows. Probably part of an ABC transporter complex. Responsible for energy coupling to the transport system. The chain is Putative ABC transporter ATP-binding protein BQ02700 from Bartonella quintana (strain Toulouse) (Rochalimaea quintana).